The sequence spans 626 residues: Chaperone protein HtpG (626 aa).

The interval 1-341 (METKQFKAES…SEDLSLNISR (341 aa)) is a; substrate-binding. The interval 342-552 (EILQHDRQLK…EGELSIEMEK (211 aa)) is b. The disordered stretch occupies residues 490-509 (DLGIEGEEKENTSSSDDKEN). The span at 498-509 (KENTSSSDDKEN) shows a compositional bias: basic and acidic residues. The c stretch occupies residues 553–626 (VLNAMPNNQN…FTNNICKIMK (74 aa)).

It belongs to the heat shock protein 90 family. As to quaternary structure, homodimer.

The protein localises to the cytoplasm. Its function is as follows. Molecular chaperone. Has ATPase activity. The chain is Chaperone protein HtpG from Clostridium botulinum (strain Okra / Type B1).